Consider the following 118-residue polypeptide: Holo-[acyl-carrier-protein] synthase (118 aa).

Asp8 and Glu50 together coordinate Mg(2+).

The protein belongs to the P-Pant transferase superfamily. AcpS family. Requires Mg(2+) as cofactor.

It localises to the cytoplasm. The catalysed reaction is apo-[ACP] + CoA = holo-[ACP] + adenosine 3',5'-bisphosphate + H(+). Functionally, transfers the 4'-phosphopantetheine moiety from coenzyme A to a Ser of acyl-carrier-protein. The sequence is that of Holo-[acyl-carrier-protein] synthase from Leifsonia xyli subsp. xyli (strain CTCB07).